Here is an 88-residue protein sequence, read N- to C-terminus: UPF0297 protein GTNG_2488 (88 aa).

It belongs to the UPF0297 family.

This Geobacillus thermodenitrificans (strain NG80-2) protein is UPF0297 protein GTNG_2488.